Here is a 478-residue protein sequence, read N- to C-terminus: Methionine aminopeptidase 2 (478 aa).

Positions 1-123 (MAGVEEASSF…DPPSVPICDL (123 aa)) are disordered. Ala2 carries the N-acetylalanine modification. Basic residues predominate over residues 36-46 (KKKRRKKKKGK). Over residues 55–79 (ELDKESGTSVDEVAKQLERQALEEK) the composition is skewed to basic and acidic residues. Ser60 and Ser63 each carry phosphoserine; alternate. 2 O-linked (GlcNAc) serine; alternate glycosylation sites follow: Ser60 and Ser63. Acidic residues predominate over residues 80-92 (EKDDDDEDGDGDG). A compositionally biased stretch (basic residues) spans 97–109 (GKKKKKKKKKRGP). Residue His231 coordinates substrate. Positions 251, 262, and 331 each coordinate a divalent metal cation. His339 is a substrate binding site. Glu364 and Glu459 together coordinate a divalent metal cation.

The protein belongs to the peptidase M24A family. Methionine aminopeptidase eukaryotic type 2 subfamily. As to quaternary structure, binds EIF2S1 at low magnesium concentrations. Interacts strongly with the eIF-2 gamma-subunit EIF2S3. Co(2+) serves as cofactor. The cofactor is Zn(2+). Requires Mn(2+) as cofactor. Fe(2+) is required as a cofactor. In terms of processing, O-glycosylated; contains 12 O-linked GlcNAc. Contains approximately 12 O-linked N-acetylglucosamine (GlcNAc) residues. O-glycosylation is required for EIF2S1 binding.

It localises to the cytoplasm. It catalyses the reaction Release of N-terminal amino acids, preferentially methionine, from peptides and arylamides.. Functionally, cotranslationally removes the N-terminal methionine from nascent proteins. The N-terminal methionine is often cleaved when the second residue in the primary sequence is small and uncharged (Met-Ala-, Cys, Gly, Pro, Ser, Thr, or Val). In terms of biological role, protects eukaryotic initiation factor EIF2S1 from translation-inhibiting phosphorylation by inhibitory kinases such as EIF2AK2/PKR and EIF2AK1/HCR. Plays a critical role in the regulation of protein synthesis. This Rattus norvegicus (Rat) protein is Methionine aminopeptidase 2 (Metap2).